Consider the following 318-residue polypeptide: Ribosomal RNA small subunit methyltransferase H (318 aa).

Residues 38-40 (GGH), D58, Y86, D107, and Q114 each bind S-adenosyl-L-methionine.

This sequence belongs to the methyltransferase superfamily. RsmH family.

Its subcellular location is the cytoplasm. The catalysed reaction is cytidine(1402) in 16S rRNA + S-adenosyl-L-methionine = N(4)-methylcytidine(1402) in 16S rRNA + S-adenosyl-L-homocysteine + H(+). Specifically methylates the N4 position of cytidine in position 1402 (C1402) of 16S rRNA. In Methylibium petroleiphilum (strain ATCC BAA-1232 / LMG 22953 / PM1), this protein is Ribosomal RNA small subunit methyltransferase H.